Consider the following 376-residue polypeptide: Succinyl-diaminopimelate desuccinylase (376 aa).

A Zn(2+)-binding site is contributed by His-68. Asp-70 is a catalytic residue. Residue Asp-101 participates in Zn(2+) binding. Glu-135 serves as the catalytic Proton acceptor. 3 residues coordinate Zn(2+): Glu-136, Glu-164, and His-349.

Belongs to the peptidase M20A family. DapE subfamily. Homodimer. Requires Zn(2+) as cofactor. Co(2+) serves as cofactor.

It carries out the reaction N-succinyl-(2S,6S)-2,6-diaminopimelate + H2O = (2S,6S)-2,6-diaminopimelate + succinate. Its pathway is amino-acid biosynthesis; L-lysine biosynthesis via DAP pathway; LL-2,6-diaminopimelate from (S)-tetrahydrodipicolinate (succinylase route): step 3/3. Catalyzes the hydrolysis of N-succinyl-L,L-diaminopimelic acid (SDAP), forming succinate and LL-2,6-diaminopimelate (DAP), an intermediate involved in the bacterial biosynthesis of lysine and meso-diaminopimelic acid, an essential component of bacterial cell walls. The polypeptide is Succinyl-diaminopimelate desuccinylase (Marinobacter nauticus (strain ATCC 700491 / DSM 11845 / VT8) (Marinobacter aquaeolei)).